Consider the following 306-residue polypeptide: Ornithine carbamoyltransferase (306 aa).

Residues 46–49 (STRT), Gln-73, Arg-97, and 124–127 (HPTQ) contribute to the carbamoyl phosphate site. Residues Asn-156, Asp-220, and 224–225 (SM) contribute to the L-ornithine site. Carbamoyl phosphate is bound by residues 260-261 (CL) and Arg-288.

Belongs to the aspartate/ornithine carbamoyltransferase superfamily. OTCase family.

The protein resides in the cytoplasm. The enzyme catalyses carbamoyl phosphate + L-ornithine = L-citrulline + phosphate + H(+). The protein operates within amino-acid degradation; L-arginine degradation via ADI pathway; carbamoyl phosphate from L-arginine: step 2/2. Reversibly catalyzes the transfer of the carbamoyl group from carbamoyl phosphate (CP) to the N(epsilon) atom of ornithine (ORN) to produce L-citrulline. This chain is Ornithine carbamoyltransferase, found in Campylobacter jejuni subsp. doylei (strain ATCC BAA-1458 / RM4099 / 269.97).